Reading from the N-terminus, the 293-residue chain is HTH-type transcriptional regulator ArgP (293 aa).

The region spanning 4 to 60 is the HTH lysR-type domain; sequence PDYRTLQALDAVIRERGFERAAQKLCITQSAVSQRIKQLENLFGQPLLVRTIPPHPT. A DNA-binding region (H-T-H motif) is located at residues 21–40; that stretch reads FERAAQKLCITQSAVSQRIK.

Belongs to the LysR transcriptional regulatory family. Homodimer.

Its function is as follows. Controls the transcription of genes involved in arginine and lysine metabolism. The sequence is that of HTH-type transcriptional regulator ArgP from Sodalis glossinidius (strain morsitans).